We begin with the raw amino-acid sequence, 309 residues long: 4-hydroxy-3-methylbut-2-enyl diphosphate reductase (309 aa).

C12 contacts [4Fe-4S] cluster. 2 residues coordinate (2E)-4-hydroxy-3-methylbut-2-enyl diphosphate: H43 and H77. H43 and H77 together coordinate dimethylallyl diphosphate. Isopentenyl diphosphate contacts are provided by H43 and H77. Residue C99 coordinates [4Fe-4S] cluster. Residue H127 participates in (2E)-4-hydroxy-3-methylbut-2-enyl diphosphate binding. H127 is a binding site for dimethylallyl diphosphate. Residue H127 coordinates isopentenyl diphosphate. E129 serves as the catalytic Proton donor. T167 lines the (2E)-4-hydroxy-3-methylbut-2-enyl diphosphate pocket. C197 is a [4Fe-4S] cluster binding site. S225, S226, N227, and S269 together coordinate (2E)-4-hydroxy-3-methylbut-2-enyl diphosphate. The dimethylallyl diphosphate site is built by S225, S226, N227, and S269. Residues S225, S226, N227, and S269 each coordinate isopentenyl diphosphate.

It belongs to the IspH family. It depends on [4Fe-4S] cluster as a cofactor.

The enzyme catalyses isopentenyl diphosphate + 2 oxidized [2Fe-2S]-[ferredoxin] + H2O = (2E)-4-hydroxy-3-methylbut-2-enyl diphosphate + 2 reduced [2Fe-2S]-[ferredoxin] + 2 H(+). It carries out the reaction dimethylallyl diphosphate + 2 oxidized [2Fe-2S]-[ferredoxin] + H2O = (2E)-4-hydroxy-3-methylbut-2-enyl diphosphate + 2 reduced [2Fe-2S]-[ferredoxin] + 2 H(+). Its pathway is isoprenoid biosynthesis; dimethylallyl diphosphate biosynthesis; dimethylallyl diphosphate from (2E)-4-hydroxy-3-methylbutenyl diphosphate: step 1/1. The protein operates within isoprenoid biosynthesis; isopentenyl diphosphate biosynthesis via DXP pathway; isopentenyl diphosphate from 1-deoxy-D-xylulose 5-phosphate: step 6/6. Functionally, catalyzes the conversion of 1-hydroxy-2-methyl-2-(E)-butenyl 4-diphosphate (HMBPP) into a mixture of isopentenyl diphosphate (IPP) and dimethylallyl diphosphate (DMAPP). Acts in the terminal step of the DOXP/MEP pathway for isoprenoid precursor biosynthesis. In Wolbachia pipientis wMel, this protein is 4-hydroxy-3-methylbut-2-enyl diphosphate reductase.